A 337-amino-acid polypeptide reads, in one-letter code: Glyceraldehyde-3-phosphate dehydrogenase (337 aa).

NAD(+) is bound by residues 13–14 (RI), Asp-35, and Lys-80. Residues 151–153 (SCT), Thr-182, 211–212 (TG), and Arg-234 each bind D-glyceraldehyde 3-phosphate. Catalysis depends on Cys-152, which acts as the Nucleophile. Asn-316 contacts NAD(+).

This sequence belongs to the glyceraldehyde-3-phosphate dehydrogenase family. Homotetramer.

It localises to the cytoplasm. The catalysed reaction is D-glyceraldehyde 3-phosphate + phosphate + NAD(+) = (2R)-3-phospho-glyceroyl phosphate + NADH + H(+). Its pathway is carbohydrate degradation; glycolysis; pyruvate from D-glyceraldehyde 3-phosphate: step 1/5. The polypeptide is Glyceraldehyde-3-phosphate dehydrogenase (GAPD) (Mycosarcoma maydis (Corn smut fungus)).